The following is a 339-amino-acid chain: Serine/threonine-protein kinase SAPK2 (339 aa).

In terms of domain architecture, Protein kinase spans Y4–F260. ATP-binding positions include I10 to A18 and K33. Residue D123 is the Proton acceptor of the active site. A C-terminal region spans residues E253–L339.

This sequence belongs to the protein kinase superfamily. Ser/Thr protein kinase family. As to quaternary structure, interacts with BZIP46. Interacts with ABI5 and PP2C30. Interacts with PP2C51. Post-translationally, phosphorylated. Expressed in leaf blades, leaf sheaths and roots. Expressed in shoots and roots of young seedlings.

Its subcellular location is the cytoplasm. The protein resides in the nucleus. It catalyses the reaction L-seryl-[protein] + ATP = O-phospho-L-seryl-[protein] + ADP + H(+). It carries out the reaction L-threonyl-[protein] + ATP = O-phospho-L-threonyl-[protein] + ADP + H(+). With respect to regulation, activated by phosphorylation in response to hyperosmotic stress within 5 minutes. Its function is as follows. May play a role in signal transduction of hyperosmotic response. Can phosphorylate BZIP46 in vitro. Together with ABI5, PP2C30 and PYL5, is part of an abscisic acid (ABA) signaling unit that modulates seed germination and early seedling growth. This is Serine/threonine-protein kinase SAPK2 (SAPK2) from Oryza sativa subsp. japonica (Rice).